A 417-amino-acid chain; its full sequence is Dihydroorotase (417 aa).

The Zn(2+) site is built by H60 and H62. Substrate is bound by residues 62 to 64 (HLR) and N94. K138, H167, H207, and D275 together coordinate Zn(2+). K138 is subject to N6-carboxylysine. The active site involves D275. Residues H279 and 289–290 (AG) contribute to the substrate site.

Belongs to the metallo-dependent hydrolases superfamily. DHOase family. Class I DHOase subfamily. Zn(2+) serves as cofactor.

The enzyme catalyses (S)-dihydroorotate + H2O = N-carbamoyl-L-aspartate + H(+). Its pathway is pyrimidine metabolism; UMP biosynthesis via de novo pathway; (S)-dihydroorotate from bicarbonate: step 3/3. In terms of biological role, catalyzes the reversible cyclization of carbamoyl aspartate to dihydroorotate. This chain is Dihydroorotase, found in Pyrococcus horikoshii (strain ATCC 700860 / DSM 12428 / JCM 9974 / NBRC 100139 / OT-3).